Here is a 475-residue protein sequence, read N- to C-terminus: tRNA-2-methylthio-N(6)-dimethylallyladenosine synthase (475 aa).

The region spanning 2–119 (AKLHITTWGC…LPEMINKIRG (118 aa)) is the MTTase N-terminal domain. The [4Fe-4S] cluster site is built by C11, C48, C82, C156, C160, and C163. The region spanning 142–374 (RAEGPTAFVS…QQRINHQAMQ (233 aa)) is the Radical SAM core domain. The TRAM domain occupies 377-440 (RAMLGTEQRV…TNSLRGDVVR (64 aa)).

The protein belongs to the methylthiotransferase family. MiaB subfamily. As to quaternary structure, monomer. It depends on [4Fe-4S] cluster as a cofactor.

Its subcellular location is the cytoplasm. It carries out the reaction N(6)-dimethylallyladenosine(37) in tRNA + (sulfur carrier)-SH + AH2 + 2 S-adenosyl-L-methionine = 2-methylsulfanyl-N(6)-dimethylallyladenosine(37) in tRNA + (sulfur carrier)-H + 5'-deoxyadenosine + L-methionine + A + S-adenosyl-L-homocysteine + 2 H(+). Its function is as follows. Catalyzes the methylthiolation of N6-(dimethylallyl)adenosine (i(6)A), leading to the formation of 2-methylthio-N6-(dimethylallyl)adenosine (ms(2)i(6)A) at position 37 in tRNAs that read codons beginning with uridine. In Actinobacillus pleuropneumoniae serotype 5b (strain L20), this protein is tRNA-2-methylthio-N(6)-dimethylallyladenosine synthase.